The sequence spans 475 residues: tRNA-2-methylthio-N(6)-dimethylallyladenosine synthase (475 aa).

The 118-residue stretch at 2-119 (AKLHITTWGC…LPEMINKIRG (118 aa)) folds into the MTTase N-terminal domain. C11, C48, C82, C156, C160, and C163 together coordinate [4Fe-4S] cluster. The Radical SAM core domain occupies 142 to 374 (RAEGPTAFVS…QQRINHQAMQ (233 aa)). The TRAM domain maps to 377-440 (RAMLGTEQRV…TNSLRGDVVR (64 aa)).

Belongs to the methylthiotransferase family. MiaB subfamily. In terms of assembly, monomer. It depends on [4Fe-4S] cluster as a cofactor.

It localises to the cytoplasm. It carries out the reaction N(6)-dimethylallyladenosine(37) in tRNA + (sulfur carrier)-SH + AH2 + 2 S-adenosyl-L-methionine = 2-methylsulfanyl-N(6)-dimethylallyladenosine(37) in tRNA + (sulfur carrier)-H + 5'-deoxyadenosine + L-methionine + A + S-adenosyl-L-homocysteine + 2 H(+). Functionally, catalyzes the methylthiolation of N6-(dimethylallyl)adenosine (i(6)A), leading to the formation of 2-methylthio-N6-(dimethylallyl)adenosine (ms(2)i(6)A) at position 37 in tRNAs that read codons beginning with uridine. This is tRNA-2-methylthio-N(6)-dimethylallyladenosine synthase from Actinobacillus pleuropneumoniae serotype 5b (strain L20).